Reading from the N-terminus, the 457-residue chain is Argininosuccinate lyase (457 aa).

Belongs to the lyase 1 family. Argininosuccinate lyase subfamily.

The protein localises to the cytoplasm. The catalysed reaction is 2-(N(omega)-L-arginino)succinate = fumarate + L-arginine. It functions in the pathway amino-acid biosynthesis; L-arginine biosynthesis; L-arginine from L-ornithine and carbamoyl phosphate: step 3/3. This is Argininosuccinate lyase from Haemophilus influenzae (strain PittGG).